A 710-amino-acid polypeptide reads, in one-letter code: Exocyst complex component 5 (710 aa).

Residues 44-96 (DTFIQTIKDLKILQEKQQSKCERLEESLRQEKESHAKKIAKLQERHQTAIDVF) adopt a coiled-coil conformation.

The protein belongs to the SEC10 family. As to quaternary structure, the exocyst complex is composed of Sec3/Exoc1, Sec5/Exoc2, Sec6/Exoc3, Sec8/Exoc4, Sec10/Exoc5, Sec15/Exoc6, Exo70/Exoc7 and Exo84/Exoc8.

Its function is as follows. Component of the exocyst complex involved in the docking of exocytic vesicles with fusion sites on the plasma membrane. This Drosophila melanogaster (Fruit fly) protein is Exocyst complex component 5.